A 164-amino-acid chain; its full sequence is Interleukin-10 (164 aa).

The first 18 residues, 1 to 18 (MPSSALLCCLIFLARVAA), serve as a signal peptide directing secretion. 2 disulfide bridges follow: C30–C126 and C80–C132. N-linked (GlcNAc...) asparagine glycosylation occurs at N134.

The protein belongs to the IL-10 family. As to quaternary structure, homodimer. Interacts with IL10RA and IL10RB.

Its subcellular location is the secreted. Functionally, major immune regulatory cytokine that acts on many cells of the immune system where it has profound anti-inflammatory functions, limiting excessive tissue disruption caused by inflammation. Mechanistically, IL10 binds to its heterotetrameric receptor comprising IL10RA and IL10RB leading to JAK1 and STAT2-mediated phosphorylation of STAT3. In turn, STAT3 translocates to the nucleus where it drives expression of anti-inflammatory mediators. Targets antigen-presenting cells (APCs) such as macrophages and monocytes and inhibits their release of pro-inflammatory cytokines including granulocyte-macrophage colony-stimulating factor /GM-CSF, granulocyte colony-stimulating factor/G-CSF, IL-1 alpha, IL-1 beta, IL-6, IL-8 and TNF-alpha. Also interferes with antigen presentation by reducing the expression of MHC-class II and co-stimulatory molecules, thereby inhibiting their ability to induce T cell activation. In addition, controls the inflammatory response of macrophages by reprogramming essential metabolic pathways including mTOR signaling. The sequence is that of Interleukin-10 (IL10) from Orcinus orca (Killer whale).